The primary structure comprises 685 residues: DNA ligase (685 aa).

NAD(+) is bound by residues 47–51 (DSEYD), 96–97 (SL), and glutamate 125. Lysine 127 acts as the N6-AMP-lysine intermediate in catalysis. NAD(+) contacts are provided by arginine 148, glutamate 185, lysine 304, and lysine 328. Cysteine 422, cysteine 425, cysteine 440, and cysteine 446 together coordinate Zn(2+). In terms of domain architecture, BRCT spans 605 to 685 (ADAQPLKGQT…ALLALFAANR (81 aa)).

Belongs to the NAD-dependent DNA ligase family. LigA subfamily. Mg(2+) serves as cofactor. Requires Mn(2+) as cofactor.

The enzyme catalyses NAD(+) + (deoxyribonucleotide)n-3'-hydroxyl + 5'-phospho-(deoxyribonucleotide)m = (deoxyribonucleotide)n+m + AMP + beta-nicotinamide D-nucleotide.. DNA ligase that catalyzes the formation of phosphodiester linkages between 5'-phosphoryl and 3'-hydroxyl groups in double-stranded DNA using NAD as a coenzyme and as the energy source for the reaction. It is essential for DNA replication and repair of damaged DNA. In Shewanella sp. (strain W3-18-1), this protein is DNA ligase.